A 380-amino-acid polypeptide reads, in one-letter code: Erythronate-4-phosphate dehydrogenase (380 aa).

Positions 45 and 66 each coordinate substrate. Aspartate 146 and threonine 174 together coordinate NAD(+). The active site involves arginine 207. Aspartate 231 is an NAD(+) binding site. Residue glutamate 236 is part of the active site. Histidine 253 acts as the Proton donor in catalysis. Glycine 256 provides a ligand contact to NAD(+). Position 257 (tyrosine 257) interacts with substrate.

The protein belongs to the D-isomer specific 2-hydroxyacid dehydrogenase family. PdxB subfamily. In terms of assembly, homodimer.

The protein localises to the cytoplasm. The catalysed reaction is 4-phospho-D-erythronate + NAD(+) = (R)-3-hydroxy-2-oxo-4-phosphooxybutanoate + NADH + H(+). Its pathway is cofactor biosynthesis; pyridoxine 5'-phosphate biosynthesis; pyridoxine 5'-phosphate from D-erythrose 4-phosphate: step 2/5. In terms of biological role, catalyzes the oxidation of erythronate-4-phosphate to 3-hydroxy-2-oxo-4-phosphonooxybutanoate. This is Erythronate-4-phosphate dehydrogenase from Pseudomonas fluorescens (strain ATCC BAA-477 / NRRL B-23932 / Pf-5).